Reading from the N-terminus, the 804-residue chain is Protein translocase subunit SecA (804 aa).

Residues glutamine 87, 105–109, and aspartate 500 contribute to the ATP site; that span reads GEGKT.

It belongs to the SecA family. As to quaternary structure, monomer and homodimer. Part of the essential Sec protein translocation apparatus which comprises SecA, SecYEG and auxiliary proteins SecDF-YajC and YidC.

It localises to the cell inner membrane. Its subcellular location is the cytoplasm. It catalyses the reaction ATP + H2O + cellular proteinSide 1 = ADP + phosphate + cellular proteinSide 2.. Functionally, part of the Sec protein translocase complex. Interacts with the SecYEG preprotein conducting channel. Has a central role in coupling the hydrolysis of ATP to the transfer of proteins into and across the cell membrane, serving both as a receptor for the preprotein-SecB complex and as an ATP-driven molecular motor driving the stepwise translocation of polypeptide chains across the membrane. This is Protein translocase subunit SecA from Neorickettsia sennetsu (strain ATCC VR-367 / Miyayama) (Ehrlichia sennetsu).